Consider the following 471-residue polypeptide: Mitochondrial distribution and morphology protein 10 (471 aa).

A disordered region spans residues 313–338 (SNSAATPPRIKNSDSQVLSNNSTDSK). Over residues 325–338 (SDSQVLSNNSTDSK) the composition is skewed to polar residues.

The protein belongs to the MDM10 family. As to quaternary structure, component of the ER-mitochondria encounter structure (ERMES) or MDM complex, composed of MMM1, MDM10, MDM12 and MDM34. Associates with the mitochondrial outer membrane sorting assembly machinery SAM(core) complex.

The protein resides in the mitochondrion outer membrane. Functionally, component of the ERMES/MDM complex, which serves as a molecular tether to connect the endoplasmic reticulum and mitochondria. Components of this complex are involved in the control of mitochondrial shape and protein biogenesis and may function in phospholipid exchange. MDM10 is involved in the late assembly steps of the general translocase of the mitochondrial outer membrane (TOM complex). Functions in the TOM40-specific route of the assembly of outer membrane beta-barrel proteins, including the association of TOM40 with the receptor TOM22 and small TOM proteins. Can associate with the SAM(core) complex as well as the MDM12-MMM1 complex, both involved in late steps of the major beta-barrel assembly pathway, that is responsible for biogenesis of all outer membrane beta-barrel proteins. May act as a switch that shuttles between both complexes and channels precursor proteins into the TOM40-specific pathway. Plays a role in mitochondrial morphology and in the inheritance of mitochondria. The chain is Mitochondrial distribution and morphology protein 10 from Debaryomyces hansenii (strain ATCC 36239 / CBS 767 / BCRC 21394 / JCM 1990 / NBRC 0083 / IGC 2968) (Yeast).